Reading from the N-terminus, the 225-residue chain is NAD(P)H-quinone oxidoreductase subunit K, chloroplastic (225 aa).

The [4Fe-4S] cluster site is built by C43, C44, C108, and C139.

The protein belongs to the complex I 20 kDa subunit family. NDH is composed of at least 16 different subunits, 5 of which are encoded in the nucleus. Requires [4Fe-4S] cluster as cofactor.

The protein resides in the plastid. It localises to the chloroplast thylakoid membrane. It catalyses the reaction a plastoquinone + NADH + (n+1) H(+)(in) = a plastoquinol + NAD(+) + n H(+)(out). The catalysed reaction is a plastoquinone + NADPH + (n+1) H(+)(in) = a plastoquinol + NADP(+) + n H(+)(out). In terms of biological role, NDH shuttles electrons from NAD(P)H:plastoquinone, via FMN and iron-sulfur (Fe-S) centers, to quinones in the photosynthetic chain and possibly in a chloroplast respiratory chain. The immediate electron acceptor for the enzyme in this species is believed to be plastoquinone. Couples the redox reaction to proton translocation, and thus conserves the redox energy in a proton gradient. This is NAD(P)H-quinone oxidoreductase subunit K, chloroplastic from Lactuca sativa (Garden lettuce).